Here is a 688-residue protein sequence, read N- to C-terminus: PHD finger protein 21A (688 aa).

A Glycyl lysine isopeptide (Lys-Gly) (interchain with G-Cter in SUMO2) cross-link involves residue K65. Disordered regions lie at residues 78–127 (SQSE…LTAS) and 327–373 (PQTV…ENPQ). Residues 85-127 (QTAQQQPLQPLQQQQPQQPQQQQQQQQQHAQQSAAAPPSLTAS) show a composition bias toward low complexity. Over residues 336–354 (SLEKQTVKSHPEAEEKQAE) the composition is skewed to basic and acidic residues. The segment at residues 434-446 (TRKRGRPPKYNAV) is a DNA-binding region (a.T hook). The interval 449–471 (FGALTPTSPPSSHPDSPENEKTE) is disordered. A Phosphothreonine modification is found at T453. At S456 the chain carries Phosphoserine. A PHD-type zinc finger spans residues 497–544 (EDFCSVCRKSGQLLMCDTCSRVYHLDCLEPPLKTIPKGMWICPRCQDQ). Residues 571 to 609 (KEEEKQKLLKWSSDLKQEREQLEQKVKELSSSISKCMEM) are a coiled coil. The disordered stretch occupies residues 650–688 (GALSNGPDCTPPANAASTPAPSPSSQSCTANCNQGEETK). Low complexity predominate over residues 660–679 (PPANAASTPAPSPSSQSCTA).

Component of a BHC histone deacetylase complex that contains HDAC1, HDAC2, HMG20B/BRAF35, KDM1A, RCOR1/CoREST and PHF21A/BHC80. The BHC complex may also contain ZMYM2, ZNF217, ZMYM3, GSE1 and GTF2I. In the complex, it interacts directly with HDAC1, HDAC2, HMG20B/BRAF35, KDM1A and RCOR1/CoREST. Expressed in the brain and testis. Weakly or not expressed in other tissues tested. Localized throughout the central nervous system (CNS) in brain, including the cerebellum, hippocampus, and cortex. Notably present in neuronal cells of granular cell layer and dentate gyrus in cerebellum and hippocampus, respectively. In the seminiferous tubules, the signals it is present strongly in spermatocytes, and weakly in spermatogonia and round spermatids. In some cases, it is also observed solely in spermatocytes (at protein level).

It is found in the nucleus. Its function is as follows. Component of the BHC complex, a corepressor complex that represses transcription of neuron-specific genes in non-neuronal cells. The BHC complex is recruited at RE1/NRSE sites by REST and acts by deacetylating and demethylating specific sites on histones, thereby acting as a chromatin modifier. In the BHC complex, it may act as a scaffold. Inhibits KDM1A-mediated demethylation of 'Lys-4' of histone H3 in vitro, suggesting a role in demethylation regulation. The sequence is that of PHD finger protein 21A from Mus musculus (Mouse).